Reading from the N-terminus, the 243-residue chain is Small ribosomal subunit protein uS5 (243 aa).

2 stretches are compositionally biased toward basic and acidic residues: residues 1-21 and 34-46; these read MPID…EGQK and LEEK…DHKG. A disordered region spans residues 1–85; the sequence is MPIDKKQEKN…NFKKNANKKP (85 aa). An S5 DRBM domain is found at 89 to 152; that stretch reads FEEKIVNIAR…KDAQNNLIRV (64 aa).

This sequence belongs to the universal ribosomal protein uS5 family. In terms of assembly, part of the 30S ribosomal subunit. Contacts proteins S4 and S8.

Its function is as follows. With S4 and S12 plays an important role in translational accuracy. In terms of biological role, located at the back of the 30S subunit body where it stabilizes the conformation of the head with respect to the body. The polypeptide is Small ribosomal subunit protein uS5 (Mycoplasma mobile (strain ATCC 43663 / 163K / NCTC 11711) (Mesomycoplasma mobile)).